A 203-amino-acid chain; its full sequence is NAD(P)H-quinone oxidoreductase subunit I (203 aa).

4Fe-4S ferredoxin-type domains lie at Gly-55–Glu-84 and Lys-95–Glu-124. [4Fe-4S] cluster-binding residues include Cys-64, Cys-67, Cys-70, Cys-74, Cys-104, Cys-107, Cys-110, and Cys-114.

The protein belongs to the complex I 23 kDa subunit family. In terms of assembly, NDH-1 is composed of at least 11 different subunits. [4Fe-4S] cluster is required as a cofactor.

It localises to the cellular thylakoid membrane. It carries out the reaction a plastoquinone + NADH + (n+1) H(+)(in) = a plastoquinol + NAD(+) + n H(+)(out). It catalyses the reaction a plastoquinone + NADPH + (n+1) H(+)(in) = a plastoquinol + NADP(+) + n H(+)(out). Its function is as follows. NDH-1 shuttles electrons from an unknown electron donor, via FMN and iron-sulfur (Fe-S) centers, to quinones in the respiratory and/or the photosynthetic chain. The immediate electron acceptor for the enzyme in this species is believed to be plastoquinone. Couples the redox reaction to proton translocation, and thus conserves the redox energy in a proton gradient. This chain is NAD(P)H-quinone oxidoreductase subunit I (ndhI), found in Picosynechococcus sp. (strain ATCC 27264 / PCC 7002 / PR-6) (Agmenellum quadruplicatum).